We begin with the raw amino-acid sequence, 470 residues long: MKVKSPLEVYNYLPRTNCGECGFDTCMSFAAHILDRSVTPLDCKPLVRDAEKDPKVKKKLEELLELTAPEIAEVVIGVGENAVKIGGEEVLHRHELTFFNPTGFFYDVWDTMDDKALEERCDRVVSYKKFYVGNFLTLDGFAVRCTSGDPKRYREVVKKVASYGKPLILVALDSECMKAALEEVADQRPLMYAATEGNWKEFLKLALEYKVPVTLRAKDLDLLKSMAVTFKQAGVKDIVLDPVTEPLGEGLKGTFERVIQLRRTAIAGQDKDVAYPIMITPIAAWLIEGDDVTKSYWEAVIASIFIVKYGDVMIFRSIDQHVVMPTITLRFNIYTDPRTPVQVEPGLRAINDPGPDDPVFITTNFALTYYTVESDLTSGGIKGWLLVLNTEGLGVEVSVAGGQFTASKVKELIEETKIEEKVNHRYLVIPGLAARLQGAIEDETGWKVLVGPMDSGRIKGWLEKNWPPKE.

In terms of domain architecture, 4Fe-4S spans 1–62 (MKVKSPLEVY…DPKVKKKLEE (62 aa)). [4Fe-4S] cluster contacts are provided by Cys-18, Cys-21, Cys-26, and Cys-43.

As to quaternary structure, heterodimer of delta and gamma chains. The ACDS complex is made up of alpha, epsilon, beta, gamma and delta chains with a probable stoichiometry of (alpha(2)epsilon(2))(4)-beta(8)-(gamma(1)delta(1))(8). Corrinoid is required as a cofactor. The cofactor is [4Fe-4S] cluster.

The enzyme catalyses 5,6,7,8-tetrahydrosarcinapterin + methyl-Co(III)-[corrinoid Fe-S protein] = 5-methyltetrahydrosarcinapterin + Co(I)-[corrinoid Fe-S protein] + H(+). Its function is as follows. Part of a complex that catalyzes the reversible cleavage of acetyl-CoA, allowing autotrophic growth from CO(2). The chain is Acetyl-CoA decarbonylase/synthase complex subunit gamma from Archaeoglobus fulgidus (strain ATCC 49558 / DSM 4304 / JCM 9628 / NBRC 100126 / VC-16).